The sequence spans 452 residues: MAVSARLRTTAEDTSIAKSTQDPIGDTEISVANAKGSSDSNIKNSPGGNSVGQESELEHVPEEDDSGDKEADHEDSETATAKKRKAQPLKNPKKSLKRGRVPAPLNLSDSNTNTHGGNIKDGNLASSNSAHFPPVANQNVKSAPAQVTQHSKFQPRVQYLGKASSRQSIQVNNSSNSYGKPHMPSAGIMSAMNPYMPMNRYIMSPYYNPYGIPPPHMLNKPIMTPYVSYPYPMGPRTSIPYAMQGGNARPYEENEYSASNYRNKRVNDSYDSPLSGTASTGKTRRSEEGSRNSSVGSSANAGPTQQRADLRPADMIPAEEYHFERDALLSANTKARSASTSTSTSTSTNRDRSSWHEAEPNKDEEEGTDLAIEDGAVPTPTFTTFQRTSQPQQQSPSLLQGEIRLSSHIFAFEFPLSSSNVDKKMFMSICNKVWNESKELTKKSSSHHRTGK.

Disordered stretches follow at residues 1 to 145 (MAVS…SAPA) and 262 to 311 (RNKR…ADLR). Polar residues-rich tracts occupy residues 12–22 (EDTSIAKSTQD) and 35–53 (KGSS…SVGQ). Ser-45 carries the post-translational modification Phosphoserine. Positions 61–77 (PEEDDSGDKEADHEDSE) are enriched in acidic residues. The span at 81-100 (AKKRKAQPLKNPKKSLKRGR) shows a compositional bias: basic residues. 4 stretches are compositionally biased toward polar residues: residues 107 to 116 (LSDSNTNTHG), 124 to 145 (LASS…SAPA), 269 to 281 (SYDS…ASTG), and 291 to 307 (RNSS…TQQR). Phosphoserine is present on residues Ser-126, Ser-142, Ser-272, and Ser-275. The interaction with FUS3 and KSS1 stretch occupies residues 212 to 452 (IPPPHMLNKP…KSSSHHRTGK (241 aa)). Ser-330 is modified (phosphoserine). The span at 331 to 348 (ANTKARSASTSTSTSTST) shows a compositional bias: low complexity. The segment at 331 to 395 (ANTKARSAST…QRTSQPQQQS (65 aa)) is disordered. The span at 349–361 (NRDRSSWHEAEPN) shows a compositional bias: basic and acidic residues. Positions 362–372 (KDEEEGTDLAI) are enriched in acidic residues. The segment covering 378–395 (PTPTFTTFQRTSQPQQQS) has biased composition (low complexity). Position 379 is a phosphothreonine (Thr-379). 2 positions are modified to phosphoserine: Ser-395 and Ser-428.

Forms a complex with DIG2, STE12 and either FUS3 or KSS1. The interaction of FUS3 with STE12 depends on the presence of both DIG1 and DIG2. STE12 is lost from FUS3/DIG1/DIG2 complex after pheromone treatment. DIG1 and DIG2 have also been reported to interact with CLN1 and CLN2. Post-translationally, phosphorylated by FUS3 and KSS1, in a pheromone-stimulated manner. Phosphorylation reduces the affinity for STE12.

Its subcellular location is the nucleus. In terms of biological role, DIG1 and DIG2 are negative regulators of the filamentation and pheromone induced mating program. DIG1 and DIG2 inhibit the transcriptional activity of STE12 by direct protein-protein interaction. DIG1 colocalizes to promoters with STE12 and redistributes with it during induction of filamentation (by butanol) or mating (by pheromone) to program specific genes, but binding of DIG1 to STE12 is reduced by pheromone treatment. The sequence is that of Down-regulator of invasive growth 1 (DIG1) from Saccharomyces cerevisiae (strain ATCC 204508 / S288c) (Baker's yeast).